The following is a 270-amino-acid chain: Inositol monophosphatase (270 aa).

Residues glutamate 71, aspartate 91, leucine 93, and aspartate 94 each contribute to the Mg(2+) site. Glutamate 71 contributes to the substrate binding site. Substrate contacts are provided by residues 93–96, 194–196, glutamate 213, and aspartate 221; these read LDGT and GSC. Mg(2+) is bound at residue aspartate 221.

Belongs to the inositol monophosphatase superfamily. The cofactor is Mg(2+).

It catalyses the reaction a myo-inositol phosphate + H2O = myo-inositol + phosphate. It functions in the pathway polyol metabolism; myo-inositol biosynthesis; myo-inositol from D-glucose 6-phosphate: step 2/2. Its activity is regulated as follows. Inhibited by Li(+). Functionally, responsible for the provision of inositol required for synthesis of phosphatidylinositol and polyphosphoinositides. This Mesembryanthemum crystallinum (Common ice plant) protein is Inositol monophosphatase (IMP1).